The primary structure comprises 45 residues: Ribosome-inactivating protein TAP-29 (45 aa).

The protein belongs to the ribosome-inactivating protein family. Type 1 RIP subfamily.

The enzyme catalyses Endohydrolysis of the N-glycosidic bond at one specific adenosine on the 28S rRNA.. Functionally, capable of inhibiting HIV-1 infection and replication. It inactivates eukaryotic 60S ribosomal subunits. The protein is Ribosome-inactivating protein TAP-29 of Trichosanthes kirilowii (Chinese snake gourd).